Here is a 577-residue protein sequence, read N- to C-terminus: MRPQSAACLLLAIVGFVGATEWWESGNYYQIYPRSFRDSDGDGIGDLNGVTEKLQYLKDIGFTGTWLSPIFKSPMVDFGYDISDFYQIHPEYGTMEDFERMIAKAKEVGIKIILDFVPNHSSTENEWFTKSVDSDPVYKDFYIWHDGKINNETGEREPPSNWNSEFRYSAWEWNEVRQQYYLHQFAIQQADLNYRNPAVVNEMKNVIRFWLGKGVSGFRIDAVPYLFEVDLDRYNQYPDEPLTNDSVNCPDPDDHCYTQHIYTQDMPETIDMVYQWRELVDEFHVENGGDKRLLMTEAYTSFENIMTYYGNGVRNGSHIPFNFDFLTSINNASKAGEYVEHIKKWMDAMPEGVYANWVLGNHDNKRVASRFGVQRTDLINILLQTLPGHAVTYNGEELGMTDVWISWEDTVDPNACNSDPDNYYARSRDPARSPYQWDASSKAGFTSADHTWLPVADDYKTNNALQQLRAPRSHLQIFKKLVRVRKEPSFRQGELNIQAIDDDVIIYSRQKTGSDLYVIVLNLGSTSKTLDLTKYYELGTQAEVITTSLSSQYIDGDVIKSTEFVANPYVGTVLVAV.

The signal sequence occupies residues 1–19 (MRPQSAACLLLAIVGFVGA). Asn119 and Asn151 each carry an N-linked (GlcNAc...) asparagine glycan. The active-site Nucleophile is the Asp221. Asn244 is a glycosylation site (N-linked (GlcNAc...) asparagine). Glu297 functions as the Proton donor in the catalytic mechanism. Asn315 and Asn331 each carry an N-linked (GlcNAc...) asparagine glycan.

This sequence belongs to the glycosyl hydrolase 13 family.

The enzyme catalyses Hydrolysis of terminal, non-reducing (1-&gt;4)-linked alpha-D-glucose residues with release of alpha-D-glucose.. This Drosophila melanogaster (Fruit fly) protein is Maltase A1 (Mal-A1).